Consider the following 213-residue polypeptide: FMN-dependent NADH:quinone oxidoreductase (213 aa).

The protein belongs to the azoreductase type 1 family. In terms of assembly, homodimer. FMN is required as a cofactor.

It catalyses the reaction 2 a quinone + NADH + H(+) = 2 a 1,4-benzosemiquinone + NAD(+). It carries out the reaction N,N-dimethyl-1,4-phenylenediamine + anthranilate + 2 NAD(+) = 2-(4-dimethylaminophenyl)diazenylbenzoate + 2 NADH + 2 H(+). Its function is as follows. Quinone reductase that provides resistance to thiol-specific stress caused by electrophilic quinones. Functionally, also exhibits azoreductase activity. Catalyzes the reductive cleavage of the azo bond in aromatic azo compounds to the corresponding amines. In Streptococcus agalactiae serotype III (strain NEM316), this protein is FMN-dependent NADH:quinone oxidoreductase.